Here is a 412-residue protein sequence, read N- to C-terminus: Histidine--tRNA ligase (412 aa).

Belongs to the class-II aminoacyl-tRNA synthetase family. Homodimer.

Its subcellular location is the cytoplasm. The enzyme catalyses tRNA(His) + L-histidine + ATP = L-histidyl-tRNA(His) + AMP + diphosphate + H(+). The sequence is that of Histidine--tRNA ligase from Maridesulfovibrio salexigens (strain ATCC 14822 / DSM 2638 / NCIMB 8403 / VKM B-1763) (Desulfovibrio salexigens).